Here is a 493-residue protein sequence, read N- to C-terminus: UDP-glucose 6-dehydrogenase (493 aa).

Residues 11–16, Asp36, Arg41, and 89–93 contribute to the NAD(+) site; these read GAGYVG and VNTPT. A disordered region spans residues 88 to 110; the sequence is SVNTPTKTYGMGKGRAADLKYIE. Lys107 is modified (N6-acetyllysine). Residues 129 to 135 are allosteric switch region; it reads KSTVPVR. 130–132 lines the NAD(+) pocket; sequence STV. Glu161 functions as the Proton donor/acceptor in the catalytic mechanism. Substrate contacts are provided by residues 161-165, 220-224, Arg260, and 267-273; these read EFLAE, KLAAN, and KASVGFG. An NAD(+)-binding site is contributed by Glu165. Lys220 serves as the catalytic Proton donor/acceptor. Residue Cys276 is the Nucleophile of the active site. 276–279 contacts NAD(+); that stretch reads CFQK. Positions 321-325 are important for formation of active hexamer structure; sequence SLFNT. 338–339 provides a ligand contact to substrate; it reads FK. Residue Arg346 coordinates NAD(+). Arg442 serves as a coordination point for substrate. The tract at residues 466-493 is disordered; the sequence is VSSKRIPYTPGEIPKFSLQDPPNKKPKV. A Phosphothreonine modification is found at Thr474.

It belongs to the UDP-glucose/GDP-mannose dehydrogenase family. Homohexamer.

The enzyme catalyses UDP-alpha-D-glucose + 2 NAD(+) + H2O = UDP-alpha-D-glucuronate + 2 NADH + 3 H(+). Its pathway is nucleotide-sugar biosynthesis; UDP-alpha-D-glucuronate biosynthesis; UDP-alpha-D-glucuronate from UDP-alpha-D-glucose: step 1/1. With respect to regulation, UDP-alpha-D-xylose (UDX) acts as a feedback inhibitor. It binds at the same site as the substrate, but functions as allosteric inhibitor by triggering a conformation change that disrupts the active hexameric ring structure and gives rise to an inactive, horseshoe-shaped hexamer. Its function is as follows. Catalyzes the formation of UDP-alpha-D-glucuronate, a constituent of complex glycosaminoglycans. Required for the biosynthesis of chondroitin sulfate and heparan sulfate. Required for embryonic development via its role in the biosynthesis of glycosaminoglycans. Required for proper brain and neuronal development. This Mus musculus (Mouse) protein is UDP-glucose 6-dehydrogenase (Ugdh).